Here is a 211-residue protein sequence, read N- to C-terminus: Orotate phosphoribosyltransferase (211 aa).

K26 provides a ligand contact to 5-phospho-alpha-D-ribose 1-diphosphate. Orotate is bound at residue 34 to 35 (FF). 5-phospho-alpha-D-ribose 1-diphosphate contacts are provided by residues 72–73 (YK), R98, K99, K102, H104, and 123–131 (DDVITAGTA). Orotate-binding residues include T127 and R155.

The protein belongs to the purine/pyrimidine phosphoribosyltransferase family. PyrE subfamily. As to quaternary structure, homodimer. It depends on Mg(2+) as a cofactor.

The catalysed reaction is orotidine 5'-phosphate + diphosphate = orotate + 5-phospho-alpha-D-ribose 1-diphosphate. It functions in the pathway pyrimidine metabolism; UMP biosynthesis via de novo pathway; UMP from orotate: step 1/2. Its function is as follows. Catalyzes the transfer of a ribosyl phosphate group from 5-phosphoribose 1-diphosphate to orotate, leading to the formation of orotidine monophosphate (OMP). This is Orotate phosphoribosyltransferase from Legionella pneumophila (strain Lens).